Here is a 380-residue protein sequence, read N- to C-terminus: Lipid-A-disaccharide synthase (380 aa).

This sequence belongs to the LpxB family.

It carries out the reaction a lipid X + a UDP-2-N,3-O-bis[(3R)-3-hydroxyacyl]-alpha-D-glucosamine = a lipid A disaccharide + UDP + H(+). It functions in the pathway bacterial outer membrane biogenesis; LPS lipid A biosynthesis. Functionally, condensation of UDP-2,3-diacylglucosamine and 2,3-diacylglucosamine-1-phosphate to form lipid A disaccharide, a precursor of lipid A, a phosphorylated glycolipid that anchors the lipopolysaccharide to the outer membrane of the cell. The sequence is that of Lipid-A-disaccharide synthase from Pseudomonas savastanoi pv. phaseolicola (strain 1448A / Race 6) (Pseudomonas syringae pv. phaseolicola (strain 1448A / Race 6)).